Here is an 86-residue protein sequence, read N- to C-terminus: Cytochrome c oxidase subunit 6B1 (86 aa).

Ala2 carries the post-translational modification N-acetylalanine. Positions 27-73 constitute a CHCH domain; that stretch reads TRNCWQNYLDFHRCEKAMTAKGGDVSVCEWYRRVYKSLCPISWVSTW. A Cx9C motif motif is present at residues 30–40; that stretch reads CWQNYLDFHRC. 2 cysteine pairs are disulfide-bonded: Cys30–Cys65 and Cys40–Cys54. The Cx10C motif motif lies at 54 to 65; it reads CEWYRRVYKSLC. The residue at position 62 (Lys62) is an N6-acetyllysine.

This sequence belongs to the cytochrome c oxidase subunit 6B family. Component of the cytochrome c oxidase (complex IV, CIV), a multisubunit enzyme composed of 14 subunits. The complex is composed of a catalytic core of 3 subunits MT-CO1, MT-CO2 and MT-CO3, encoded in the mitochondrial DNA, and 11 supernumerary subunits COX4I1 (or COX4I2), COX5A, COX5B, COX6A2 (or COX6A1), COX6B1 (or COX6B2), COX6C, COX7A1 (or COX7A2), COX7B, COX7C, COX8B and NDUFA4, which are encoded in the nuclear genome. The complex exists as a monomer or a dimer and forms supercomplexes (SCs) in the inner mitochondrial membrane with NADH-ubiquinone oxidoreductase (complex I, CI) and ubiquinol-cytochrome c oxidoreductase (cytochrome b-c1 complex, complex III, CIII), resulting in different assemblies (supercomplex SCI(1)III(2)IV(1) and megacomplex MCI(2)III(2)IV(2)).

Its subcellular location is the mitochondrion inner membrane. It participates in energy metabolism; oxidative phosphorylation. Component of the cytochrome c oxidase, the last enzyme in the mitochondrial electron transport chain which drives oxidative phosphorylation. The respiratory chain contains 3 multisubunit complexes succinate dehydrogenase (complex II, CII), ubiquinol-cytochrome c oxidoreductase (cytochrome b-c1 complex, complex III, CIII) and cytochrome c oxidase (complex IV, CIV), that cooperate to transfer electrons derived from NADH and succinate to molecular oxygen, creating an electrochemical gradient over the inner membrane that drives transmembrane transport and the ATP synthase. Cytochrome c oxidase is the component of the respiratory chain that catalyzes the reduction of oxygen to water. Electrons originating from reduced cytochrome c in the intermembrane space (IMS) are transferred via the dinuclear copper A center (CU(A)) of subunit 2 and heme A of subunit 1 to the active site in subunit 1, a binuclear center (BNC) formed by heme A3 and copper B (CU(B)). The BNC reduces molecular oxygen to 2 water molecules using 4 electrons from cytochrome c in the IMS and 4 protons from the mitochondrial matrix. The sequence is that of Cytochrome c oxidase subunit 6B1 (COX6B1) from Bos taurus (Bovine).